Reading from the N-terminus, the 177-residue chain is Ribosome maturation factor RimP (177 aa).

Over residues 153 to 171 the composition is skewed to basic and acidic residues; it reads VEFNRKDTKNDNQTEHDNK. A disordered region spans residues 153 to 177; that stretch reads VEFNRKDTKNDNQTEHDNKTEEEEA.

The protein belongs to the RimP family.

The protein resides in the cytoplasm. Functionally, required for maturation of 30S ribosomal subunits. The polypeptide is Ribosome maturation factor RimP (Streptomyces coelicolor (strain ATCC BAA-471 / A3(2) / M145)).